Consider the following 126-residue polypeptide: Small ribosomal subunit protein uS13 (126 aa).

The tract at residues 91–126 (RHRRGLPVRGQRTSTNARTRKGPRRAIAGKKKPGKK) is disordered. The span at 108–126 (RTRKGPRRAIAGKKKPGKK) shows a compositional bias: basic residues.

This sequence belongs to the universal ribosomal protein uS13 family. In terms of assembly, part of the 30S ribosomal subunit. Forms a loose heterodimer with protein S19. Forms two bridges to the 50S subunit in the 70S ribosome.

Located at the top of the head of the 30S subunit, it contacts several helices of the 16S rRNA. In the 70S ribosome it contacts the 23S rRNA (bridge B1a) and protein L5 of the 50S subunit (bridge B1b), connecting the 2 subunits; these bridges are implicated in subunit movement. Contacts the tRNAs in the A and P-sites. This Streptomyces coelicolor (strain ATCC BAA-471 / A3(2) / M145) protein is Small ribosomal subunit protein uS13.